The primary structure comprises 194 residues: MSPFSIVLIGFAMSTDAFAAAIGKGAAMRKPQWRDALRAGLIFGCIEAITPVIGWLLGRAASSYVSAYDHWIAFVLLGALGTHMIVAGLRNGPEEAEDAASDTPKRHGVLGLATTGFATSIDAMAVGVSLAFLDVHIGVVAVVVGLCTFSMVTAGVMLGRALGNLIGKRAEMLGGLILVIVGSVILYEHLSGAA.

Helical transmembrane passes span 3-23 (PFSI…AAIG), 37-57 (LRAG…GWLL), 69-89 (DHWI…VAGL), 110-132 (LGLA…SLAF), 147-167 (CTFS…NLIG), and 172-192 (MLGG…HLSG).

The protein belongs to the MntP (TC 9.B.29) family.

The protein localises to the cell inner membrane. Probably functions as a manganese efflux pump. The protein is Putative manganese efflux pump MntP of Xanthomonas euvesicatoria pv. vesicatoria (strain 85-10) (Xanthomonas campestris pv. vesicatoria).